The sequence spans 65 residues: Large ribosomal subunit protein uL29 (65 aa).

Belongs to the universal ribosomal protein uL29 family.

The sequence is that of Large ribosomal subunit protein uL29 from Acidithiobacillus ferrooxidans (strain ATCC 23270 / DSM 14882 / CIP 104768 / NCIMB 8455) (Ferrobacillus ferrooxidans (strain ATCC 23270)).